Here is a 264-residue protein sequence, read N- to C-terminus: NADH dehydrogenase [ubiquinone] iron-sulfur protein 3, mitochondrial (264 aa).

The N-terminal 36 residues, 1–36 (MAAAAVARLWWRGILGASALTRGTGRPSVLLLPVRR), are a transit peptide targeting the mitochondrion.

This sequence belongs to the complex I 30 kDa subunit family. As to quaternary structure, core subunit of respiratory chain NADH dehydrogenase (Complex I) which is composed of 45 different subunits. Interacts with NDUFAF3. Interacts with RAB5IF. Found in subcomplexes containing subunits NDUFS2, MT-ND1 and NDUFA13.

It is found in the mitochondrion inner membrane. The catalysed reaction is a ubiquinone + NADH + 5 H(+)(in) = a ubiquinol + NAD(+) + 4 H(+)(out). Functionally, core subunit of the mitochondrial membrane respiratory chain NADH dehydrogenase (Complex I) which catalyzes electron transfer from NADH through the respiratory chain, using ubiquinone as an electron acceptor. Essential for the catalytic activity and assembly of complex I. The chain is NADH dehydrogenase [ubiquinone] iron-sulfur protein 3, mitochondrial (NDUFS3) from Pan troglodytes (Chimpanzee).